The primary structure comprises 2089 residues: Non-reducing polyketide synthase PKS16 (2089 aa).

The tract at residues 8-243 (VLFGDQTVDP…IKLPITAAFH (236 aa)) is N-terminal acylcarrier protein transacylase (SAT) domain (SAT). Positions 342–364 (AGIEVSRSTEMQPRQEQRTKPRS) are disordered. Over residues 354 to 364 (PRQEQRTKPRS) the composition is skewed to basic and acidic residues. A Ketosynthase family 3 (KS3) domain is found at 364–793 (SSDIAIIGYA…GGNTSLLIED (430 aa)). Catalysis depends on for beta-ketoacyl synthase activity residues cysteine 536, histidine 671, and histidine 710. The tract at residues 891–1214 (VFLFTGQGSQ…SIANAYNSGV (324 aa)) is malonyl-CoA:ACP transacylase (MAT) domain. The tract at residues 1273–1586 (TTCLQVIENE…KRTTLQSLLG (314 aa)) is product template (PT) domain. The segment at 1276-1408 (LQVIENETFT…CTVMYGDGHQ (133 aa)) is N-terminal hotdog fold. In terms of domain architecture, PKS/mFAS DH spans 1276 to 1582 (LQVIENETFT…FQQMKRTTLQ (307 aa)). The active-site Proton acceptor; for dehydratase activity is histidine 1309. The tract at residues 1435-1582 (IHRMLKEMIY…FQQMKRTTLQ (148 aa)) is C-terminal hotdog fold. The active-site Proton donor; for dehydratase activity is aspartate 1495. The Carrier 1 domain occupies 1617–1694 (QSPVAGFSKV…ELRAFFLDKM (78 aa)). Serine 1654 carries the post-translational modification O-(pantetheine 4'-phosphoryl)serine. Positions 1697 to 1730 (PQATANDDDSDDSSDDEGPGFSRSQSNSTISTPE) are disordered. Over residues 1702–1714 (NDDDSDDSSDDEG) the composition is skewed to acidic residues. The span at 1718-1728 (SRSQSNSTIST) shows a compositional bias: polar residues. A Carrier 2 domain is found at 1729–1806 (PEEPDVVNVL…DVQKALGAAP (78 aa)). At serine 1766 the chain carries O-(pantetheine 4'-phosphoryl)serine. The thioesterase (TE) domain stretch occupies residues 1848-2083 (LFLLPDGAGS…VVGGNHFSIM (236 aa)).

It participates in secondary metabolite biosynthesis. In terms of biological role, non-reducing polyketide synthase; part of the gene cluster that mediates the biosynthesis of orcinol depsidone grayanic acid (GRA), the only major secondary metabolite known in C.grayi. The first step consists in the ring and depside synthesis by PKS16 leading to 4-O-demethylsphaerophorin, involving different orcinol-like rings, one with acetyl CoA and the other with octanoyl CoA as the starter. Further depsidone formation by the GRA cluster-specific cytochrome P450 leads to 4-O-demethylgrayanic acid. Finally, the cluster specific O-methyltransferase probably converts the 4-O-demethylgrayanic acid into grayanic acid. The protein is Non-reducing polyketide synthase PKS16 of Cladonia grayi (Gray's cup lichen).